We begin with the raw amino-acid sequence, 962 residues long: Vacuolar membrane protease (962 aa).

At 1–14 the chain is on the cytoplasmic side; sequence MLAQFLRSLFRFRK. Residues 15–35 form a helical membrane-spanning segment; the sequence is TTVSVLLVATYVVVFLLNVWD. Residues 36-359 are Vacuolar-facing; it reads RIRYQYSLPE…FVTASTKDLF (324 aa). The N-linked (GlcNAc...) asparagine glycan is linked to Asn-118. Positions 153 and 165 each coordinate Zn(2+). Glu-197 acts as the Proton acceptor in catalysis. Zn(2+)-binding residues include Glu-198, Glu-223, and His-297. A helical membrane pass occupies residues 360 to 380; the sequence is TLNCVVLSVIPVIILVLEFVI. The Cytoplasmic portion of the chain corresponds to 381 to 390; sequence QRRKTRERNP. The chain crosses the membrane as a helical span at residues 391–411; sequence LLVWLRLPFSMFISYLVTATF. Topologically, residues 412–431 are vacuolar; it reads RSSLFRVNPLIFSRDYVSPT. Residues 432-452 form a helical membrane-spanning segment; that stretch reads IGFSFTFLILNYLVLSLLEYL. At 453–460 the chain is on the cytoplasmic side; it reads APSRDLKT. Residues 461–481 form a helical membrane-spanning segment; that stretch reads VSFVELFFGMWIALLWATIRL. The Vacuolar portion of the chain corresponds to 482–489; sequence CTSKYTAT. The helical transmembrane segment at 490 to 510 threads the bilayer; that stretch reads GVYPITVLYLLMSFGAIVGLV. The Cytoplasmic portion of the chain corresponds to 511-601; it reads CSAFKRKHSV…VVSALNYDWS (91 aa). Positions 531–554 are enriched in polar residues; the sequence is APNTYSSIEESPQQATNTEAPNEN. The disordered stretch occupies residues 531-563; that stretch reads APNTYSSIEESPQQATNTEAPNENSPEEHDERA. The chain crosses the membrane as a helical span at residues 602-622; the sequence is VQFLAVVPLASFFVIMCLSLI. The Vacuolar portion of the chain corresponds to 623-639; sequence LDGIYQTCQEGFQATWN. Asn-639 carries an N-linked (GlcNAc...) asparagine glycan. A helical membrane pass occupies residues 640–660; it reads VSKISMLGGMLLAIPVLPFCY. A topological domain (cytoplasmic) is located at residue Lys-661. A helical transmembrane segment spans residues 662–682; it reads LNYFVSMVLLFAAASAGIFSF. The Vacuolar segment spans residues 683-962; the sequence is ERAPFTESSP…LVIVNDYIEL (280 aa). N-linked (GlcNAc...) asparagine glycans are attached at residues Asn-812 and Asn-839.

The protein belongs to the peptidase M28 family. Zn(2+) is required as a cofactor.

The protein resides in the vacuole membrane. Functionally, may be involved in vacuolar sorting and osmoregulation. The polypeptide is Vacuolar membrane protease (Lachancea thermotolerans (strain ATCC 56472 / CBS 6340 / NRRL Y-8284) (Yeast)).